A 596-amino-acid chain; its full sequence is Elongation factor 4 (596 aa).

The tr-type G domain occupies 2-184 (DHIRNFSIIA…AVVARIPPPK (183 aa)). GTP contacts are provided by residues 14–19 (DHGKST) and 131–134 (NKID).

It belongs to the TRAFAC class translation factor GTPase superfamily. Classic translation factor GTPase family. LepA subfamily.

It is found in the cell inner membrane. The catalysed reaction is GTP + H2O = GDP + phosphate + H(+). Functionally, required for accurate and efficient protein synthesis under certain stress conditions. May act as a fidelity factor of the translation reaction, by catalyzing a one-codon backward translocation of tRNAs on improperly translocated ribosomes. Back-translocation proceeds from a post-translocation (POST) complex to a pre-translocation (PRE) complex, thus giving elongation factor G a second chance to translocate the tRNAs correctly. Binds to ribosomes in a GTP-dependent manner. The sequence is that of Elongation factor 4 from Dechloromonas aromatica (strain RCB).